Reading from the N-terminus, the 233-residue chain is Segregation and condensation protein A (233 aa).

Belongs to the ScpA family. As to quaternary structure, component of a cohesin-like complex composed of ScpA, ScpB and the Smc homodimer, in which ScpA and ScpB bind to the head domain of Smc. The presence of the three proteins is required for the association of the complex with DNA.

It is found in the cytoplasm. Functionally, participates in chromosomal partition during cell division. May act via the formation of a condensin-like complex containing Smc and ScpB that pull DNA away from mid-cell into both cell halves. In Streptococcus pyogenes serotype M1, this protein is Segregation and condensation protein A.